Consider the following 478-residue polypeptide: Protein FAM83E (478 aa).

The segment at 1 to 293 (MAASQLAALE…LYAASCPLPP (293 aa)) is DUF1669. Disordered regions lie at residues 292–334 (PPAP…PLAH), 359–436 (RART…LPPA), and 452–478 (DATFKLQEPRGVRPSDWAPRAGLGGQP). The segment covering 309 to 319 (RSPHRVSRRRS) has biased composition (basic residues). Positions 379–388 (RLSQLSGSSD) are enriched in polar residues.

The protein belongs to the FAM83 family. In terms of assembly, directly interacts (via DUF1669) with CSNK1A1, CSNK1A1L, CSNK1D and CSNK1E. May interact with RAF1.

The protein localises to the cytoplasm. It localises to the perinuclear region. In terms of biological role, may play a role in MAPK signaling. The sequence is that of Protein FAM83E from Homo sapiens (Human).